Reading from the N-terminus, the 147-residue chain is Large ribosomal subunit protein bL9 (147 aa).

This sequence belongs to the bacterial ribosomal protein bL9 family.

In terms of biological role, binds to the 23S rRNA. This is Large ribosomal subunit protein bL9 from Campylobacter jejuni subsp. jejuni serotype O:6 (strain 81116 / NCTC 11828).